A 445-amino-acid chain; its full sequence is 3-phosphoshikimate 1-carboxyvinyltransferase (445 aa).

3 residues coordinate 3-phosphoshikimate: K34, S35, and R39. K34 provides a ligand contact to phosphoenolpyruvate. Residues G112 and R140 each coordinate phosphoenolpyruvate. Residues S186, S187, Q188, S216, E331, and H358 each coordinate 3-phosphoshikimate. Q188 contributes to the phosphoenolpyruvate binding site. Catalysis depends on E331, which acts as the Proton acceptor. Phosphoenolpyruvate-binding residues include R362, R403, and K428.

This sequence belongs to the EPSP synthase family. In terms of assembly, monomer.

The protein resides in the cytoplasm. It carries out the reaction 3-phosphoshikimate + phosphoenolpyruvate = 5-O-(1-carboxyvinyl)-3-phosphoshikimate + phosphate. The protein operates within metabolic intermediate biosynthesis; chorismate biosynthesis; chorismate from D-erythrose 4-phosphate and phosphoenolpyruvate: step 6/7. Functionally, catalyzes the transfer of the enolpyruvyl moiety of phosphoenolpyruvate (PEP) to the 5-hydroxyl of shikimate-3-phosphate (S3P) to produce enolpyruvyl shikimate-3-phosphate and inorganic phosphate. The chain is 3-phosphoshikimate 1-carboxyvinyltransferase from Kocuria rhizophila (strain ATCC 9341 / DSM 348 / NBRC 103217 / DC2201).